The sequence spans 469 residues: ATP synthase subunit beta (469 aa).

Residue 156–163 participates in ATP binding; sequence GGAGVGKT.

It belongs to the ATPase alpha/beta chains family. F-type ATPases have 2 components, CF(1) - the catalytic core - and CF(0) - the membrane proton channel. CF(1) has five subunits: alpha(3), beta(3), gamma(1), delta(1), epsilon(1). CF(0) has three main subunits: a(1), b(2) and c(9-12). The alpha and beta chains form an alternating ring which encloses part of the gamma chain. CF(1) is attached to CF(0) by a central stalk formed by the gamma and epsilon chains, while a peripheral stalk is formed by the delta and b chains.

The protein localises to the cell membrane. The enzyme catalyses ATP + H2O + 4 H(+)(in) = ADP + phosphate + 5 H(+)(out). Produces ATP from ADP in the presence of a proton gradient across the membrane. The catalytic sites are hosted primarily by the beta subunits. This Lactococcus lactis subsp. cremoris (strain SK11) protein is ATP synthase subunit beta.